The following is a 703-amino-acid chain: Lethal(3)malignant brain tumor-like protein 2 (703 aa).

Positions 1-85 (MEKPRGTEEA…NNRSLDGSGS (85 aa)) are disordered. Ser13 is modified (phosphoserine). Over residues 15 to 25 (PMEEEEEDDLD) the composition is skewed to acidic residues. The span at 35-49 (SYNSSAGSESSSYLE) shows a compositional bias: low complexity. The segment covering 50–60 (ESSEAENEDRE) has biased composition (acidic residues). Ser67 carries the post-translational modification Phosphoserine. The span at 73-82 (SSANNRSLDG) shows a compositional bias: polar residues. The segment at 81-116 (DGSGSEPAVCEMCGIVGTREAFFSKTKRFCSVSCSR) adopts an FCS-type zinc-finger fold. The Zn(2+) site is built by Cys90, Cys93, Cys110, and Cys114. MBT repeat units lie at residues 179-283 (FDWG…LVPP), 291-391 (TDWK…IKMS), 397-500 (MSHH…LTPP), and 508-604 (FAWE…LQPP). A Phosphoserine modification is found at Ser338. Lys405 is covalently cross-linked (Glycyl lysine isopeptide (Lys-Gly) (interchain with G-Cter in SUMO2)). The interval 604 to 649 (PVSAEPNTPQKGKDTTKKKKKQFGKKRKRIPSAKTRPLRQGSKKPL) is disordered. Residues 619–634 (TKKKKKQFGKKRKRIP) show a composition bias toward basic residues. Residues Lys647 and Lys673 each participate in a glycyl lysine isopeptide (Lys-Gly) (interchain with G-Cter in SUMO2) cross-link. The tract at residues 675 to 703 (EHQDISSLDRSPSPQLPLPIESIKQERNN) is disordered. Phosphoserine occurs at positions 681, 685, and 687. Lys698 participates in a covalent cross-link: Glycyl lysine isopeptide (Lys-Gly) (interchain with G-Cter in SUMO1); alternate. A Glycyl lysine isopeptide (Lys-Gly) (interchain with G-Cter in SUMO2); alternate cross-link involves residue Lys698.

As to quaternary structure, part of the E2F6.com-1 complex in G0 phase composed of E2F6, MGA, MAX, TFDP1, CBX3, BAT8, EUHMTASE1, RING1, RNF2, MBLR, BAT8 and YAF2. In terms of processing, phosphorylated. As to expression, ubiquitous.

Its subcellular location is the nucleus. Functionally, putative Polycomb group (PcG) protein. PcG proteins maintain the transcriptionally repressive state of genes, probably via a modification of chromatin, rendering it heritably changed in its expressibility. Its association with a chromatin-remodeling complex suggests that it may contribute to prevent expression of genes that trigger the cell into mitosis. Binds to monomethylated and dimethylated 'Lys-20' on histone H4. Binds histone H3 peptides that are monomethylated or dimethylated on 'Lys-4', 'Lys-9' or 'Lys-27'. The chain is Lethal(3)malignant brain tumor-like protein 2 (L3mbtl2) from Mus musculus (Mouse).